A 293-amino-acid chain; its full sequence is GTPase Era (293 aa).

Residues Arg-5–Trp-174 form the Era-type G domain. A G1 region spans residues Gly-13 to Ser-20. Position 13-20 (Gly-13–Ser-20) interacts with GTP. The interval Gln-39 to Ser-43 is G2. Residues Asp-60–Gly-63 form a G3 region. GTP is bound by residues Asp-60–Ile-64 and Asn-122–Asp-125. Residues Asn-122–Asp-125 form a G4 region. The interval Ile-150–Ala-152 is G5. The 78-residue stretch at Leu-202–Glu-279 folds into the KH type-2 domain.

This sequence belongs to the TRAFAC class TrmE-Era-EngA-EngB-Septin-like GTPase superfamily. Era GTPase family. Monomer.

It is found in the cytoplasm. Its subcellular location is the cell inner membrane. Functionally, an essential GTPase that binds both GDP and GTP, with rapid nucleotide exchange. Plays a role in 16S rRNA processing and 30S ribosomal subunit biogenesis and possibly also in cell cycle regulation and energy metabolism. The polypeptide is GTPase Era (Rickettsia akari (strain Hartford)).